The primary structure comprises 233 residues: 2-C-methyl-D-erythritol 4-phosphate cytidylyltransferase (233 aa).

Belongs to the IspD/TarI cytidylyltransferase family. IspD subfamily.

It catalyses the reaction 2-C-methyl-D-erythritol 4-phosphate + CTP + H(+) = 4-CDP-2-C-methyl-D-erythritol + diphosphate. It participates in isoprenoid biosynthesis; isopentenyl diphosphate biosynthesis via DXP pathway; isopentenyl diphosphate from 1-deoxy-D-xylulose 5-phosphate: step 2/6. Its function is as follows. Catalyzes the formation of 4-diphosphocytidyl-2-C-methyl-D-erythritol from CTP and 2-C-methyl-D-erythritol 4-phosphate (MEP). This Vibrio atlanticus (strain LGP32) (Vibrio splendidus (strain Mel32)) protein is 2-C-methyl-D-erythritol 4-phosphate cytidylyltransferase.